The primary structure comprises 392 residues: Chalcone synthase B (392 aa).

The active site involves Cys-167.

This sequence belongs to the thiolase-like superfamily. Chalcone/stilbene synthases family. As to expression, expressed at low level in seedlings after illumination with UV light. No expression in flowers or tissue culture.

The enzyme catalyses (E)-4-coumaroyl-CoA + 3 malonyl-CoA + 3 H(+) = 2',4,4',6'-tetrahydroxychalcone + 3 CO2 + 4 CoA. It functions in the pathway secondary metabolite biosynthesis; flavonoid biosynthesis. The primary product of this enzyme is 4,2',4',6'-tetrahydroxychalcone (also termed naringenin-chalcone or chalcone) which can under specific conditions spontaneously isomerize into naringenin. This chain is Chalcone synthase B (CHSB), found in Petunia hybrida (Petunia).